The following is a 370-amino-acid chain: Allatostatins (370 aa).

An N-terminal signal peptide occupies residues 1–27 (MSGPRTCFCLPSALVLVLLSLSTSALG). Residues 28–65 (TAPEPSGVHEESPAGGGTDLLPHPEDLSASDNPDLEFV) constitute a propeptide that is removed on maturation. Positions 29 to 58 (APEPSGVHEESPAGGGTDLLPHPEDLSASD) are disordered. 4 positions are modified to leucine amide: leucine 73, leucine 94, leucine 105, and leucine 117. Positions 121-151 (DYDYYGEEDEDDQQAIGDEDIEESDVGDLMD) are excised as a propeptide. Leucine 161, leucine 172, leucine 188, leucine 200, leucine 213, and leucine 232 each carry leucine amide. A propeptide spanning residues 236–251 (SDDIDFRELEEKFAED) is cleaved from the precursor. At leucine 264 the chain carries Leucine amide. A propeptide spanning residues 268 to 345 (EVEPSELEAV…ITPEEFSRMV (78 aa)) is cleaved from the precursor. The tract at residues 273-298 (ELEAVRNEEKDNSSVHDKKNNTNDMH) is disordered. Position 353 is a leucine amide (leucine 353). Residue isoleucine 364 is modified to Isoleucine amide. The propeptide occupies 368 to 370 (SER).

Belongs to the allatostatin family. In terms of tissue distribution, brain, subesophageal ganglion and corpus allatum.

Its subcellular location is the secreted. Its function is as follows. Neuropeptide inhibitors of juvenile hormone synthesis and gut muscle contraction. In Diploptera punctata (Pacific beetle cockroach), this protein is Allatostatins.